The primary structure comprises 147 residues: Transmembrane protein 210 (147 aa).

Residues 1 to 31 form the signal peptide; that stretch reads MAPCPQPESCPAGSPLGLICLSLLLIPASAG. The Extracellular segment spans residues 32 to 47; that stretch reads TYCECSLGLSREALIA. Residues 48-68 traverse the membrane as a helical segment; that stretch reads LIVVLAGVSASCFCALVVVAI. Residues 69-147 are Cytoplasmic-facing; it reads GVFRAKGDTC…PPPPPPPLPQ (79 aa). Residues 128–147 form a disordered region; sequence TMTAPLEPPPPPPPPPPLPQ. Residues 133–147 show a composition bias toward pro residues; the sequence is LEPPPPPPPPPPLPQ.

The protein localises to the membrane. The protein resides in the cytoplasmic vesicle. It is found in the secretory vesicle. It localises to the acrosome. This Mus musculus (Mouse) protein is Transmembrane protein 210 (Tmem210).